The following is a 248-amino-acid chain: Probable transcriptional regulatory protein SO_2432 (248 aa).

Belongs to the TACO1 family.

Its subcellular location is the cytoplasm. This Shewanella oneidensis (strain ATCC 700550 / JCM 31522 / CIP 106686 / LMG 19005 / NCIMB 14063 / MR-1) protein is Probable transcriptional regulatory protein SO_2432.